A 268-amino-acid polypeptide reads, in one-letter code: Indole-3-glycerol phosphate synthase (268 aa).

Belongs to the TrpC family.

It catalyses the reaction 1-(2-carboxyphenylamino)-1-deoxy-D-ribulose 5-phosphate + H(+) = (1S,2R)-1-C-(indol-3-yl)glycerol 3-phosphate + CO2 + H2O. It participates in amino-acid biosynthesis; L-tryptophan biosynthesis; L-tryptophan from chorismate: step 4/5. This chain is Indole-3-glycerol phosphate synthase, found in Micrococcus luteus (strain ATCC 4698 / DSM 20030 / JCM 1464 / CCM 169 / CCUG 5858 / IAM 1056 / NBRC 3333 / NCIMB 9278 / NCTC 2665 / VKM Ac-2230) (Micrococcus lysodeikticus).